A 138-amino-acid polypeptide reads, in one-letter code: Acidic phospholipase A2 BITP01A (138 aa).

A signal peptide spans 1-16 (MRTLWIMAVLLVGVEG). 7 cysteine pairs are disulfide-bonded: Cys42/Cys131, Cys44/Cys60, Cys59/Cys111, Cys65/Cys138, Cys66/Cys104, Cys73/Cys97, and Cys91/Cys102. Ca(2+) is bound by residues Tyr43, Gly45, and Gly47. His63 is an active-site residue. Asp64 serves as a coordination point for Ca(2+). Residue Asp105 is part of the active site.

Requires Ca(2+) as cofactor. As to expression, expressed by the venom gland.

The protein localises to the secreted. It carries out the reaction a 1,2-diacyl-sn-glycero-3-phosphocholine + H2O = a 1-acyl-sn-glycero-3-phosphocholine + a fatty acid + H(+). Functionally, snake venom phospholipase A2 (PLA2) that induces edema in mice, produces neuromuscular blockade in chick biventer cervicis, increases CK release and produces myonecrosis. PLA2 catalyzes the calcium-dependent hydrolysis of the 2-acyl groups in 3-sn-phosphoglycerides. This Bothrops insularis (Golden lancehead) protein is Acidic phospholipase A2 BITP01A.